The following is a 329-amino-acid chain: Sex comb on midleg-like protein 1 (329 aa).

Phosphoserine is present on residues Ser138 and Ser238. A disordered region spans residues 138–157 (SPTLPVSRRENNSPSNLPRP). An SAM domain is found at 258–325 (WSVEAVVLFL…YYIDRLKQGK (68 aa)).

This sequence belongs to the SCM family.

Its subcellular location is the nucleus. In terms of biological role, putative Polycomb group (PcG) protein. PcG proteins act by forming multiprotein complexes, which are required to maintain the transcriptionally repressive state of homeotic genes throughout development. May be involved in spermatogenesis during sexual maturation. The sequence is that of Sex comb on midleg-like protein 1 (SCML1) from Gorilla gorilla gorilla (Western lowland gorilla).